The following is a 502-amino-acid chain: Cytochrome P450 71B17 (502 aa).

A helical membrane pass occupies residues 1-21; it reads MAISLLCLFLITFVSLTIVGC. A heme-binding site is contributed by cysteine 444.

This sequence belongs to the cytochrome P450 family. Heme is required as a cofactor.

It is found in the membrane. This Arabidopsis thaliana (Mouse-ear cress) protein is Cytochrome P450 71B17 (CYP71B17).